The sequence spans 215 residues: Pyrrolidone-carboxylate peptidase (215 aa).

Catalysis depends on residues glutamate 80, cysteine 143, and histidine 167.

The protein belongs to the peptidase C15 family. In terms of assembly, homotetramer.

It localises to the cytoplasm. The catalysed reaction is Release of an N-terminal pyroglutamyl group from a polypeptide, the second amino acid generally not being Pro.. In terms of biological role, removes 5-oxoproline from various penultimate amino acid residues except L-proline. In Bacillus cereus (strain ZK / E33L), this protein is Pyrrolidone-carboxylate peptidase.